The chain runs to 515 residues: Germ cell-less protein-like 1 (515 aa).

Residues 1–35 (MGSLSSRVLRQPRPALAQQAQGARAGGSARRPDTG) form a disordered region. The segment covering 11–29 (QPRPALAQQAQGARAGGSA) has biased composition (low complexity). The Nuclear localization signal signature appears at 49–55 (SHKRKRS). Residues 65–85 (DSETDEDEEEGDEQQRLLNTP) are disordered. Ser-66 carries the phosphoserine modification. Positions 67-76 (ETDEDEEEGD) are enriched in acidic residues. Thr-68 is subject to Phosphothreonine. Positions 85–91 (PRRKKLK) match the Nuclear localization signal motif. Residues 108–178 (SDIKICALGE…LYRDDVLIKP (71 aa)) form the BTB domain.

Interacts with TMPO-beta, TSG101 and TFDP2. Interacts with EMD.

The protein localises to the nucleus matrix. Its function is as follows. Possible function in spermatogenesis. Enhances the degradation of MDM2 and increases the amount of p53 probably by modulating the nucleocytoplasmic transport. This Homo sapiens (Human) protein is Germ cell-less protein-like 1 (GMCL1).